Here is a 122-residue protein sequence, read N- to C-terminus: Large ribosomal subunit protein uL14 (122 aa).

Belongs to the universal ribosomal protein uL14 family. In terms of assembly, part of the 50S ribosomal subunit. Forms a cluster with proteins L3 and L19. In the 70S ribosome, L14 and L19 interact and together make contacts with the 16S rRNA in bridges B5 and B8.

In terms of biological role, binds to 23S rRNA. Forms part of two intersubunit bridges in the 70S ribosome. This Oleidesulfovibrio alaskensis (strain ATCC BAA-1058 / DSM 17464 / G20) (Desulfovibrio alaskensis) protein is Large ribosomal subunit protein uL14.